Reading from the N-terminus, the 1074-residue chain is BRD4-interacting chromatin-remodeling complex-associated protein-like (1074 aa).

Disordered regions lie at residues 542-603, 620-689, 834-874, and 887-952; these read AVSS…NTPG, TSPI…GQKR, TPLD…HDQF, and GNIS…SKLP. Composition is skewed to polar residues over residues 544–576, 591–603, 620–629, and 660–680; these read SSAS…QANR, ASKS…NTPG, TSPIPTSKTT, and GATQ…TAVQ. Phosphoserine is present on Ser621. Composition is skewed to basic and acidic residues over residues 889 to 904, 913 to 925, and 934 to 948; these read ISKK…KFDR, PPED…DPAK, and EGHR…HGSE. Phosphoserine is present on Ser976.

As to quaternary structure, component of the multiprotein chromatin-remodeling complexes SWI/SNF: SWI/SNF-A (BAF), SWI/SNF-B (PBAF) and related complexes. The canonical complex contains a catalytic subunit (either SMARCA4/BRG1/BAF190A or SMARCA2/BRM/BAF190B) and at least SMARCE1, ACTL6A/BAF53, SMARCC1/BAF155, SMARCC2/BAF170, and SMARCB1/SNF5/BAF47. Other subunits specific to each of the complexes may also be present permitting several possible combinations developmentally and tissue specific. Component of the SWI/SNF (GBAF) subcomplex, which includes at least BICRA or BICRAL (mutually exclusive), BRD9, SS18, the core BAF subunits, SMARCA2/BRM, SMARCA4/BRG1/BAF190A, ACTL6A/BAF53, SMARCC1/BAF155, and SMARCD1/BAF60A.

In terms of biological role, component of SWI/SNF chromatin remodeling subcomplex GBAF that carries out key enzymatic activities, changing chromatin structure by altering DNA-histone contacts within a nucleosome in an ATP-dependent manner. The polypeptide is BRD4-interacting chromatin-remodeling complex-associated protein-like (Mus musculus (Mouse)).